The primary structure comprises 180 residues: MYHVIAATTNPAKINAITLAFDDVYGPGQYRIEGVNVDSGVPLQPIGSTETRIGARQRVKNARQVRPKADFWVGIEAGIEDNMTFAWMVIEHLQARGESRSASLMLPDIILQGIRQGRELGDEMAVLSGISNVKQQGGAIGIFTQGKLTRTSVYHQALLLALVPFHNEIYQRPSPSKPAI.

Residue 8-13 (TTNPAK) participates in substrate binding. D38 serves as a coordination point for Mg(2+).

The protein belongs to the YjjX NTPase family. Homodimer. Mg(2+) is required as a cofactor. Mn(2+) serves as cofactor.

It carries out the reaction XTP + H2O = XDP + phosphate + H(+). The enzyme catalyses ITP + H2O = IDP + phosphate + H(+). Functionally, phosphatase that hydrolyzes non-canonical purine nucleotides such as XTP and ITP to their respective diphosphate derivatives. Probably excludes non-canonical purines from DNA/RNA precursor pool, thus preventing their incorporation into DNA/RNA and avoiding chromosomal lesions. This Yersinia pseudotuberculosis serotype O:1b (strain IP 31758) protein is Inosine/xanthosine triphosphatase.